A 360-amino-acid polypeptide reads, in one-letter code: Meiosis-inducing protein 1 (360 aa).

Residues 102 to 135 are disordered; it reads SKETKTTKDCTMATGPERGKKSSESTRSSSLSSL. Positions 126–135 are enriched in low complexity; sequence STRSSSLSSL.

In terms of assembly, interacts with UME6.

The protein localises to the nucleus. Its function is as follows. Transcription factor required for sporulation and for early sporulation-specific genes expression. Positive regulator of SME1/IME2 expression. Directly activates expression of SLZ1 during meiosis. The chain is Meiosis-inducing protein 1 (IME1) from Saccharomyces cerevisiae (strain ATCC 204508 / S288c) (Baker's yeast).